A 150-amino-acid polypeptide reads, in one-letter code: Arginine repressor (150 aa).

Belongs to the ArgR family.

It is found in the cytoplasm. It participates in amino-acid biosynthesis; L-arginine biosynthesis [regulation]. In terms of biological role, regulates arginine biosynthesis genes. This chain is Arginine repressor, found in Clostridium beijerinckii (strain ATCC 51743 / NCIMB 8052) (Clostridium acetobutylicum).